The chain runs to 434 residues: 3-phosphoshikimate 1-carboxyvinyltransferase (434 aa).

3-phosphoshikimate-binding residues include Lys22, Ser23, and Arg27. Residue Lys22 coordinates phosphoenolpyruvate. Residues Gly93 and Arg121 each coordinate phosphoenolpyruvate. 3-phosphoshikimate contacts are provided by Ser168, Ser169, Gln170, Ser199, Asp320, and Lys347. Gln170 is a phosphoenolpyruvate binding site. The Proton acceptor role is filled by Asp320. Phosphoenolpyruvate-binding residues include Arg351, Arg394, and Lys419.

It belongs to the EPSP synthase family. As to quaternary structure, monomer.

The protein resides in the cytoplasm. The enzyme catalyses 3-phosphoshikimate + phosphoenolpyruvate = 5-O-(1-carboxyvinyl)-3-phosphoshikimate + phosphate. Its pathway is metabolic intermediate biosynthesis; chorismate biosynthesis; chorismate from D-erythrose 4-phosphate and phosphoenolpyruvate: step 6/7. Its function is as follows. Catalyzes the transfer of the enolpyruvyl moiety of phosphoenolpyruvate (PEP) to the 5-hydroxyl of shikimate-3-phosphate (S3P) to produce enolpyruvyl shikimate-3-phosphate and inorganic phosphate. The polypeptide is 3-phosphoshikimate 1-carboxyvinyltransferase (Burkholderia cenocepacia (strain ATCC BAA-245 / DSM 16553 / LMG 16656 / NCTC 13227 / J2315 / CF5610) (Burkholderia cepacia (strain J2315))).